Here is a 461-residue protein sequence, read N- to C-terminus: tRNA modification GTPase MnmE (461 aa).

Arg-23, Glu-84, and Lys-123 together coordinate (6S)-5-formyl-5,6,7,8-tetrahydrofolate. Positions 219-382 (GVQVVIGGRP…LLDHLTDTVA (164 aa)) constitute a TrmE-type G domain. GTP contacts are provided by residues 229–234 (NAGKST), 248–254 (SETPGTT), 273–276 (DTAG), and 337–340 (NKAD). Positions 233 and 254 each coordinate Mg(2+). Lys-461 is a (6S)-5-formyl-5,6,7,8-tetrahydrofolate binding site.

This sequence belongs to the TRAFAC class TrmE-Era-EngA-EngB-Septin-like GTPase superfamily. TrmE GTPase family. As to quaternary structure, homodimer. Heterotetramer of two MnmE and two MnmG subunits. Requires K(+) as cofactor.

It localises to the cytoplasm. Functionally, exhibits a very high intrinsic GTPase hydrolysis rate. Involved in the addition of a carboxymethylaminomethyl (cmnm) group at the wobble position (U34) of certain tRNAs, forming tRNA-cmnm(5)s(2)U34. This Salinibacter ruber (strain DSM 13855 / M31) protein is tRNA modification GTPase MnmE.